The sequence spans 626 residues: Chaperone protein DnaK (626 aa).

Position 197 is a phosphothreonine; by autocatalysis (Thr197). Residues Gln595–Lys614 are compositionally biased toward low complexity. Residues Gln595 to Glu626 are disordered.

This sequence belongs to the heat shock protein 70 family.

Acts as a chaperone. This Nautilia profundicola (strain ATCC BAA-1463 / DSM 18972 / AmH) protein is Chaperone protein DnaK.